Here is a 299-residue protein sequence, read N- to C-terminus: MHVVILGSAAGGGVPQWNCRCSICSLAWAGDPRVKARTQSSIAVSPDGERWLLLNASPDIRQQIQANPQMHPREGLRHSPIHAVLLTNGDVDHVAGLLTLREGQPFTLYATPGILASVSDNRVFDVMAADVVKRQTIALDETFEPVPGLSVTLFSVPGKVPLWLEDASMEIGAETETTVGTMIEAGGKRLAYIPGCARVTEDLKARVAGVDALLFDGTVLEDDDMIRAGVGTKTGWRMGHIQINGETGSIASFADVALGRRVLIHINNTNPILIEDSPERAGVEARGWTVAHDGLTLDL.

It belongs to the PqqB family.

It functions in the pathway cofactor biosynthesis; pyrroloquinoline quinone biosynthesis. Its function is as follows. May be involved in the transport of PQQ or its precursor to the periplasm. The chain is Coenzyme PQQ synthesis protein B from Methylorubrum populi (strain ATCC BAA-705 / NCIMB 13946 / BJ001) (Methylobacterium populi).